The chain runs to 404 residues: Probable tRNA sulfurtransferase (404 aa).

Residues 60–165 (EPVAEALKNV…DEAAYISHEE (106 aa)) form the THUMP domain. Residues 183–184 (ML), 208–209 (HF), arginine 265, glycine 287, and glutamine 296 contribute to the ATP site.

Belongs to the ThiI family.

It localises to the cytoplasm. It catalyses the reaction [ThiI sulfur-carrier protein]-S-sulfanyl-L-cysteine + a uridine in tRNA + 2 reduced [2Fe-2S]-[ferredoxin] + ATP + H(+) = [ThiI sulfur-carrier protein]-L-cysteine + a 4-thiouridine in tRNA + 2 oxidized [2Fe-2S]-[ferredoxin] + AMP + diphosphate. The catalysed reaction is [ThiS sulfur-carrier protein]-C-terminal Gly-Gly-AMP + S-sulfanyl-L-cysteinyl-[cysteine desulfurase] + AH2 = [ThiS sulfur-carrier protein]-C-terminal-Gly-aminoethanethioate + L-cysteinyl-[cysteine desulfurase] + A + AMP + 2 H(+). Its pathway is cofactor biosynthesis; thiamine diphosphate biosynthesis. In terms of biological role, catalyzes the ATP-dependent transfer of a sulfur to tRNA to produce 4-thiouridine in position 8 of tRNAs, which functions as a near-UV photosensor. Also catalyzes the transfer of sulfur to the sulfur carrier protein ThiS, forming ThiS-thiocarboxylate. This is a step in the synthesis of thiazole, in the thiamine biosynthesis pathway. The sulfur is donated as persulfide by IscS. This is Probable tRNA sulfurtransferase from Streptococcus uberis (strain ATCC BAA-854 / 0140J).